A 319-amino-acid chain; its full sequence is Ribosomal RNA small subunit methyltransferase H (319 aa).

S-adenosyl-L-methionine-binding positions include 39-41, Asp59, Phe83, Asp104, and Gln111; that span reads GGH.

Belongs to the methyltransferase superfamily. RsmH family.

It is found in the cytoplasm. The enzyme catalyses cytidine(1402) in 16S rRNA + S-adenosyl-L-methionine = N(4)-methylcytidine(1402) in 16S rRNA + S-adenosyl-L-homocysteine + H(+). Functionally, specifically methylates the N4 position of cytidine in position 1402 (C1402) of 16S rRNA. In Ralstonia pickettii (strain 12D), this protein is Ribosomal RNA small subunit methyltransferase H.